The sequence spans 122 residues: Large ribosomal subunit protein uL14 (122 aa).

This sequence belongs to the universal ribosomal protein uL14 family. In terms of assembly, part of the 50S ribosomal subunit. Forms a cluster with proteins L3 and L19. In the 70S ribosome, L14 and L19 interact and together make contacts with the 16S rRNA in bridges B5 and B8.

Functionally, binds to 23S rRNA. Forms part of two intersubunit bridges in the 70S ribosome. This is Large ribosomal subunit protein uL14 from Wolinella succinogenes (strain ATCC 29543 / DSM 1740 / CCUG 13145 / JCM 31913 / LMG 7466 / NCTC 11488 / FDC 602W) (Vibrio succinogenes).